The chain runs to 463 residues: Ribosomal protein uS12 methylthiotransferase RimO (463 aa).

Positions 15-130 constitute an MTTase N-terminal domain; sequence PKVGMVSLGC…VMQAVHSHLP (116 aa). [4Fe-4S] cluster-binding residues include Cys-24, Cys-60, Cys-89, Cys-161, Cys-165, and Cys-168. A Radical SAM core domain is found at 147-392; the sequence is LTPRHYAYLK…MEVAEEVSAA (246 aa). The 69-residue stretch at 395–463 folds into the TRAM domain; it reads ARKIGKTLKV…ADSHDLWGEV (69 aa).

Belongs to the methylthiotransferase family. RimO subfamily. It depends on [4Fe-4S] cluster as a cofactor.

Its subcellular location is the cytoplasm. The catalysed reaction is L-aspartate(89)-[ribosomal protein uS12]-hydrogen + (sulfur carrier)-SH + AH2 + 2 S-adenosyl-L-methionine = 3-methylsulfanyl-L-aspartate(89)-[ribosomal protein uS12]-hydrogen + (sulfur carrier)-H + 5'-deoxyadenosine + L-methionine + A + S-adenosyl-L-homocysteine + 2 H(+). Catalyzes the methylthiolation of an aspartic acid residue of ribosomal protein uS12. This chain is Ribosomal protein uS12 methylthiotransferase RimO, found in Burkholderia pseudomallei (strain 668).